The chain runs to 411 residues: MSISFDLTIDDTRDQLARHARASLEAKPSLIGMSREEMAAALIAAGVPERQVKMRISQLWHWLYVRGVSDFADMRNISKDLRAMLAQHFTIARPEVVEEQISQDGTRKWLFRFPPRGAGRPVEIESVYIPEEGRGTLCISSQVGCTLTCSFCHTGTQKLVRNLTSEEILAQLLTARDRLGDFPDKDTPDGAMVPAEGRKITNIVMMGMGEPLYNFEEVKKALLIASDGDGLSLSKRRITLSTSGVVPEIYRTGDEIGVMLAISLHAVRDELRDILVPINKKYPLAELIKACREYPGLSNAKRITFEYVMLKDINDSLDDAKLLVKLLQGIPAKINLIPFNPWPGTNYQCSDWEQIEKFADYVNAAGYASPIRTPRGRDILAACGQLKSESERLRKSERLALEAMMIAGHGE.

The Proton acceptor role is filled by E125. In terms of domain architecture, Radical SAM core spans 131-380 (EEGRGTLCIS…IRTPRGRDIL (250 aa)). A disulfide bridge links C138 with C383. C145, C149, and C152 together coordinate [4Fe-4S] cluster. S-adenosyl-L-methionine contacts are provided by residues 209 to 210 (GE), S241, 263 to 265 (SLH), and N340. The active-site S-methylcysteine intermediate is C383.

The protein belongs to the radical SAM superfamily. RlmN family. It depends on [4Fe-4S] cluster as a cofactor.

It is found in the cytoplasm. The enzyme catalyses adenosine(2503) in 23S rRNA + 2 reduced [2Fe-2S]-[ferredoxin] + 2 S-adenosyl-L-methionine = 2-methyladenosine(2503) in 23S rRNA + 5'-deoxyadenosine + L-methionine + 2 oxidized [2Fe-2S]-[ferredoxin] + S-adenosyl-L-homocysteine. It catalyses the reaction adenosine(37) in tRNA + 2 reduced [2Fe-2S]-[ferredoxin] + 2 S-adenosyl-L-methionine = 2-methyladenosine(37) in tRNA + 5'-deoxyadenosine + L-methionine + 2 oxidized [2Fe-2S]-[ferredoxin] + S-adenosyl-L-homocysteine. Its function is as follows. Specifically methylates position 2 of adenine 2503 in 23S rRNA and position 2 of adenine 37 in tRNAs. m2A2503 modification seems to play a crucial role in the proofreading step occurring at the peptidyl transferase center and thus would serve to optimize ribosomal fidelity. This is Dual-specificity RNA methyltransferase RlmN from Brucella canis (strain ATCC 23365 / NCTC 10854 / RM-666).